The sequence spans 273 residues: Large ribosomal subunit protein uL2 (273 aa).

The disordered stretch occupies residues 228-273 (VDHPHGGGEGKTSGGRHPVTPWGFPTKGKKTRKNKRTSKFIIKKRK). Basic residues predominate over residues 254–273 (KGKKTRKNKRTSKFIIKKRK).

It belongs to the universal ribosomal protein uL2 family. As to quaternary structure, part of the 50S ribosomal subunit. Forms a bridge to the 30S subunit in the 70S ribosome.

One of the primary rRNA binding proteins. Required for association of the 30S and 50S subunits to form the 70S ribosome, for tRNA binding and peptide bond formation. It has been suggested to have peptidyltransferase activity; this is somewhat controversial. Makes several contacts with the 16S rRNA in the 70S ribosome. This Rickettsia bellii (strain OSU 85-389) protein is Large ribosomal subunit protein uL2.